Consider the following 428-residue polypeptide: 3-phosphoshikimate 1-carboxyvinyltransferase (428 aa).

3-phosphoshikimate is bound by residues K23, S24, and R28. K23 serves as a coordination point for phosphoenolpyruvate. Positions 97 and 125 each coordinate phosphoenolpyruvate. 3-phosphoshikimate-binding residues include S170, S171, Q172, S198, D314, N337, and K341. Residue Q172 coordinates phosphoenolpyruvate. D314 acts as the Proton acceptor in catalysis. Phosphoenolpyruvate is bound by residues R345, R387, and K412.

This sequence belongs to the EPSP synthase family. As to quaternary structure, monomer.

Its subcellular location is the cytoplasm. The enzyme catalyses 3-phosphoshikimate + phosphoenolpyruvate = 5-O-(1-carboxyvinyl)-3-phosphoshikimate + phosphate. It participates in metabolic intermediate biosynthesis; chorismate biosynthesis; chorismate from D-erythrose 4-phosphate and phosphoenolpyruvate: step 6/7. Catalyzes the transfer of the enolpyruvyl moiety of phosphoenolpyruvate (PEP) to the 5-hydroxyl of shikimate-3-phosphate (S3P) to produce enolpyruvyl shikimate-3-phosphate and inorganic phosphate. This chain is 3-phosphoshikimate 1-carboxyvinyltransferase, found in Hamiltonella defensa subsp. Acyrthosiphon pisum (strain 5AT).